Here is a 173-residue protein sequence, read N- to C-terminus: Alpha-crystallin A chain (173 aa).

The residue at position 1 (methionine 1) is an N-acetylmethionine. A required for complex formation with BFSP1 and BFSP2 region spans residues 1-63 (MDVTIQHPWF…RTVLDSGISE (63 aa)). Glutamine 6 carries the deamidated glutamine; partial modification. Position 45 is a phosphoserine (serine 45). Deamidated glutamine; partial is present on glutamine 50. The 111-residue stretch at 52–162 (LFRTVLDSGI…GHSERAIPVS (111 aa)) folds into the sHSP domain. At lysine 70 the chain carries N6-acetyllysine. Glutamine 90 is modified (deamidated glutamine; partial). Lysine 99 carries the post-translational modification N6-acetyllysine. Position 100 (histidine 100) interacts with Zn(2+). Asparagine 101 carries the post-translational modification Deamidated asparagine; partial. Glutamate 102 and histidine 107 together coordinate Zn(2+). Serine 122 carries the phosphoserine modification. Asparagine 123 is modified (deamidated asparagine; partial). Residues 145–173 (KVQSGLDAGHSERAIPVSREEKPSSAPSS) are disordered. A Deamidated glutamine; partial modification is found at glutamine 147. The segment covering 153–167 (GHSERAIPVSREEKP) has biased composition (basic and acidic residues). Histidine 154 provides a ligand contact to Zn(2+). An O-linked (GlcNAc) serine glycan is attached at serine 162.

Belongs to the small heat shock protein (HSP20) family. In terms of assembly, heteromer composed of three CRYAA and one CRYAB subunits. Inter-subunit bridging via zinc ions enhances stability, which is crucial as there is no protein turn over in the lens. Can also form homodimers and homotetramers (dimers of dimers) which serve as the building blocks of homooligomers. Within homooligomers, the zinc-binding motif is created from residues of 3 different molecules. His-100 and Glu-102 from one molecule are ligands of the zinc ion, and His-107 and His-154 residues from additional molecules complete the site with tetrahedral coordination geometry. Part of a complex required for lens intermediate filament formation composed of BFSP1, BFSP2 and CRYAA. In terms of processing, acetylation at Lys-70 may increase chaperone activity. Post-translationally, undergoes age-dependent proteolytical cleavage at the C-terminus.

It localises to the cytoplasm. It is found in the nucleus. Its function is as follows. Contributes to the transparency and refractive index of the lens. Acts as a chaperone, preventing aggregation of various proteins under a wide range of stress conditions. Required for the correct formation of lens intermediate filaments as part of a complex composed of BFSP1, BFSP2 and CRYAA. This Oryctolagus cuniculus (Rabbit) protein is Alpha-crystallin A chain (CRYAA).